The following is a 146-amino-acid chain: Ribosome maturation factor RimP (146 aa).

This sequence belongs to the RimP family.

The protein localises to the cytoplasm. Functionally, required for maturation of 30S ribosomal subunits. The sequence is that of Ribosome maturation factor RimP from Helicobacter pylori (strain HPAG1).